A 351-amino-acid polypeptide reads, in one-letter code: Protein RecA (351 aa).

ATP is bound at residue 67–74 (GPESSGKT).

The protein belongs to the RecA family.

The protein resides in the cytoplasm. Functionally, can catalyze the hydrolysis of ATP in the presence of single-stranded DNA, the ATP-dependent uptake of single-stranded DNA by duplex DNA, and the ATP-dependent hybridization of homologous single-stranded DNAs. It interacts with LexA causing its activation and leading to its autocatalytic cleavage. The polypeptide is Protein RecA (Mannheimia succiniciproducens (strain KCTC 0769BP / MBEL55E)).